The sequence spans 974 residues: Mediator of RNA polymerase II transcription subunit 16 (974 aa).

The disordered stretch occupies residues Glu62–Gly92. Low complexity predominate over residues Ser63 to Ser75. Polar residues predominate over residues Val76–Gly92. The Nuclear localization signal motif lies at Lys889–Lys893.

The protein belongs to the Mediator complex subunit 16 family. As to quaternary structure, component of the Mediator complex, which is composed of at least 21 subunits that form three structurally distinct submodules. The Mediator head module contains MED6, MED8, MED11, SRB4/MED17, SRB5/MED18, ROX3/MED19, SRB2/MED20 and SRB6/MED22, the middle module contains MED1, MED4, NUT1/MED5, MED7, CSE2/MED9, NUT2/MED10, SRB7/MED21 and SOH1/MED31, and the tail module contains MED2, PGD1/MED3, RGR1/MED14, GAL11/MED15 and SIN4/MED16. The head and the middle modules interact directly with RNA polymerase II, whereas the elongated tail module interacts with gene-specific regulatory proteins. Interacts with HOG1. In terms of processing, phosphorylated by KIN28.

The protein localises to the nucleus. Its function is as follows. Component of the Mediator complex, a coactivator involved in the regulated transcription of nearly all RNA polymerase II-dependent genes. Mediator functions as a bridge to convey information from gene-specific regulatory proteins to the basal RNA polymerase II transcription machinery. The Mediator complex, having a compact conformation in its free form, is recruited to promoters by direct interactions with regulatory proteins and serves for the assembly of a functional preinitiation complex with RNA polymerase II and the general transcription factors. The Mediator complex unfolds to an extended conformation and partially surrounds RNA polymerase II, specifically interacting with the unphosphorylated form of the C-terminal domain (CTD) of RNA polymerase II. The Mediator complex dissociates from the RNA polymerase II holoenzyme and stays at the promoter when transcriptional elongation begins. The chain is Mediator of RNA polymerase II transcription subunit 16 (SIN4) from Saccharomyces cerevisiae (strain ATCC 204508 / S288c) (Baker's yeast).